The primary structure comprises 228 residues: 5'-methylthioadenosine/S-adenosylhomocysteine nucleosidase (228 aa).

Glutamate 11 functions as the Proton acceptor in the catalytic mechanism. Residues glycine 77, isoleucine 151, and methionine 172–glutamate 173 each bind substrate. The active-site Proton donor is aspartate 196.

The protein belongs to the PNP/UDP phosphorylase family. MtnN subfamily.

It carries out the reaction S-adenosyl-L-homocysteine + H2O = S-(5-deoxy-D-ribos-5-yl)-L-homocysteine + adenine. It catalyses the reaction S-methyl-5'-thioadenosine + H2O = 5-(methylsulfanyl)-D-ribose + adenine. The enzyme catalyses 5'-deoxyadenosine + H2O = 5-deoxy-D-ribose + adenine. It functions in the pathway amino-acid biosynthesis; L-methionine biosynthesis via salvage pathway; S-methyl-5-thio-alpha-D-ribose 1-phosphate from S-methyl-5'-thioadenosine (hydrolase route): step 1/2. In terms of biological role, catalyzes the irreversible cleavage of the glycosidic bond in both 5'-methylthioadenosine (MTA) and S-adenosylhomocysteine (SAH/AdoHcy) to adenine and the corresponding thioribose, 5'-methylthioribose and S-ribosylhomocysteine, respectively. Also cleaves 5'-deoxyadenosine, a toxic by-product of radical S-adenosylmethionine (SAM) enzymes, into 5-deoxyribose and adenine. This chain is 5'-methylthioadenosine/S-adenosylhomocysteine nucleosidase, found in Staphylococcus haemolyticus (strain JCSC1435).